The primary structure comprises 376 residues: Serine-arginine protein 55 (376 aa).

The region spanning 4–74 is the RRM 1 domain; it reads SRVYVGGLPY…ERVVVEPARG (71 aa). The tract at residues 73-114 is disordered; that stretch reads RGTARGSNRDRYDDRYGGRRGGGGGRYNEKNKNSRSSSRYGP. A compositionally biased stretch (basic and acidic residues) spans 79–89; it reads SNRDRYDDRYG. The RRM 2 domain maps to 120–193; it reads YRLIVENLSS…RRIHLVEDRR (74 aa). Residue serine 165 is modified to Phosphoserine. Over residues 185 to 194 the composition is skewed to basic and acidic residues; it reads RIHLVEDRRG. The interval 185–376 is disordered; it reads RIHLVEDRRG…PDRNNESMDD (192 aa). Positions 196 to 205 are enriched in gly residues; that stretch reads RSGGGGGSGR. Basic residues-rich tracts occupy residues 215–263 and 271–283; these read SRSR…SRSN and SKSK…RSRS. Over residues 284-304 the composition is skewed to basic and acidic residues; it reads PKRERDSRSRSRSVSKRESRS.

This sequence belongs to the splicing factor SR family. In terms of processing, extensively phosphorylated on serine residues in the RS domain.

The protein resides in the nucleus. Functionally, essential for development. May have a critical role in splicing or in controlling alternative splice site use of at least some pre-mRNA in vivo. Not required for all splicing. May play a general role in the condensation or decondensation of chromatin. In Drosophila melanogaster (Fruit fly), this protein is Serine-arginine protein 55 (B52).